Reading from the N-terminus, the 201-residue chain is Prostamide/prostaglandin F synthase (201 aa).

It belongs to the peroxiredoxin-like PRXL2 family. Prostamide/prostaglandin F synthase subfamily.

The protein resides in the cytoplasm. The protein localises to the cytosol. It catalyses the reaction prostaglandin H2 + [thioredoxin]-dithiol = prostaglandin F2alpha + [thioredoxin]-disulfide. The enzyme catalyses prostamide F2alpha + [thioredoxin]-disulfide = prostamide H2 + [thioredoxin]-dithiol. Functionally, catalyzes the reduction of prostaglandin-ethanolamide H(2) (prostamide H(2)) to prostamide F(2alpha) with NADPH as proton donor. Also able to reduce prostaglandin H(2) to prostaglandin F(2alpha). The polypeptide is Prostamide/prostaglandin F synthase (prxl2b) (Danio rerio (Zebrafish)).